Consider the following 103-residue polypeptide: Large ribosomal subunit protein bL21 (103 aa).

The protein belongs to the bacterial ribosomal protein bL21 family. As to quaternary structure, part of the 50S ribosomal subunit. Contacts protein L20.

In terms of biological role, this protein binds to 23S rRNA in the presence of protein L20. This chain is Large ribosomal subunit protein bL21, found in Aeromonas hydrophila subsp. hydrophila (strain ATCC 7966 / DSM 30187 / BCRC 13018 / CCUG 14551 / JCM 1027 / KCTC 2358 / NCIMB 9240 / NCTC 8049).